The sequence spans 1374 residues: DNA-directed RNA polymerase subunit beta (1374 aa).

The protein belongs to the RNA polymerase beta chain family. In terms of assembly, the RNAP catalytic core consists of 2 alpha, 1 beta, 1 beta' and 1 omega subunit. When a sigma factor is associated with the core the holoenzyme is formed, which can initiate transcription.

It carries out the reaction RNA(n) + a ribonucleoside 5'-triphosphate = RNA(n+1) + diphosphate. DNA-dependent RNA polymerase catalyzes the transcription of DNA into RNA using the four ribonucleoside triphosphates as substrates. This is DNA-directed RNA polymerase subunit beta from Rickettsia typhi (strain ATCC VR-144 / Wilmington).